The following is a 185-amino-acid chain: Large ribosomal subunit protein bL25 (185 aa).

It belongs to the bacterial ribosomal protein bL25 family. CTC subfamily. In terms of assembly, part of the 50S ribosomal subunit; part of the 5S rRNA/L5/L18/L25 subcomplex. Contacts the 5S rRNA. Binds to the 5S rRNA independently of L5 and L18.

In terms of biological role, this is one of the proteins that binds to the 5S RNA in the ribosome where it forms part of the central protuberance. This Chlamydia trachomatis serovar L2 (strain ATCC VR-902B / DSM 19102 / 434/Bu) protein is Large ribosomal subunit protein bL25.